The sequence spans 1229 residues: Vacuolar protein sorting-associated protein 8 homolog (1229 aa).

Residues 67–89 (EFGMPVPHATPTPSIGEDSTIRT) form a disordered region. The CHCR repeat unit spans residues 901-1063 (ETTRLLSLHY…ILPHQELQSI (163 aa)). The RING-type; atypical zinc finger occupies 1148–1189 (CSMCRQRLYDHSQVLIFGGCGHGIHEQCMEESETQFEECPRC).

Belongs to the VPS8 family. In terms of assembly, component of the class C core vacuole/endosome tethering (CORVET) complex composed of at least Vps8, dor/Vps18, car/Vps33A and Vps16A; unlike in other species, Vps11 is not part of the Drosophila complex. Due to the reduced number of components the Drosophila CORVET complex is often referred to as the miniCORVET complex. Has a higher affinity than the homotypic fusion and vacuole protein sorting (HOPS) tethering complex-specific component lt/Vps41 for Vps16A, car/Vps33A and dor/Vps18, the core components shared by both tethering complexes.

The protein resides in the early endosome. Part of the class C core vacuole/endosome tethering (CORVET) complex involved in endo-lysosomal vesicle trafficking and lysosome biogenesis by facilitating docking and fusion of endosomal vesicles. The CORVET complex acts upstream of the homotypic fusion and vacuole protein sorting (HOPS) tethering complex but is not involved in autophagic flux. The CORVET complex may cooperate with the early endosomal tether Rbsn-5 to mediate endosomal fusion. As part of the CORVET complex recruited to endosomes by activated GTP-bound Rab5. Specifically required for endocytic trafficking in a subset of cells, such as hemocytes and nephrocytes, which are highly active in endocytosis. The sequence is that of Vacuolar protein sorting-associated protein 8 homolog from Drosophila melanogaster (Fruit fly).